A 196-amino-acid polypeptide reads, in one-letter code: uncharacterized protein (196 aa).

This is an uncharacterized protein from Aquifex aeolicus (strain VF5).